A 64-amino-acid chain; its full sequence is Large ribosomal subunit protein bL35 (64 aa).

A compositionally biased stretch (basic residues) spans 1-15 (MPKNKTHSGTAKRFR). A disordered region spans residues 1–27 (MPKNKTHSGTAKRFRVTGSGKLRREQA).

The protein belongs to the bacterial ribosomal protein bL35 family.

In Saccharopolyspora erythraea (strain ATCC 11635 / DSM 40517 / JCM 4748 / NBRC 13426 / NCIMB 8594 / NRRL 2338), this protein is Large ribosomal subunit protein bL35.